The chain runs to 168 residues: 3-isopropylmalate dehydratase small subunit 2 (168 aa).

Belongs to the LeuD family. LeuD type 2 subfamily. As to quaternary structure, heterodimer of LeuC and LeuD.

The enzyme catalyses (2R,3S)-3-isopropylmalate = (2S)-2-isopropylmalate. The protein operates within amino-acid biosynthesis; L-leucine biosynthesis; L-leucine from 3-methyl-2-oxobutanoate: step 2/4. In terms of biological role, catalyzes the isomerization between 2-isopropylmalate and 3-isopropylmalate, via the formation of 2-isopropylmaleate. The protein is 3-isopropylmalate dehydratase small subunit 2 (leuD2) of Methanopyrus kandleri (strain AV19 / DSM 6324 / JCM 9639 / NBRC 100938).